The sequence spans 313 residues: Protoheme IX farnesyltransferase (313 aa).

The next 9 membrane-spanning stretches (helical) occupy residues 35-55 (LVVF…HPVL), 56-76 (AATS…LNMW), 98-118 (VSSP…VATL), 120-140 (VLVN…YAVV), 153-173 (IVIG…AATG), 180-200 (IILF…LALF), 226-246 (ILLY…LGYF), 248-268 (AAYG…AFNV), and 292-312 (LFLL…AAMI).

It belongs to the UbiA prenyltransferase family. Protoheme IX farnesyltransferase subfamily.

It is found in the cell inner membrane. It catalyses the reaction heme b + (2E,6E)-farnesyl diphosphate + H2O = Fe(II)-heme o + diphosphate. It functions in the pathway porphyrin-containing compound metabolism; heme O biosynthesis; heme O from protoheme: step 1/1. In terms of biological role, converts heme B (protoheme IX) to heme O by substitution of the vinyl group on carbon 2 of heme B porphyrin ring with a hydroxyethyl farnesyl side group. The chain is Protoheme IX farnesyltransferase from Afipia carboxidovorans (strain ATCC 49405 / DSM 1227 / KCTC 32145 / OM5) (Oligotropha carboxidovorans).